The chain runs to 164 residues: Crossover junction endodeoxyribonuclease RuvC (164 aa).

Residues Asp7, Glu67, and Asp140 contribute to the active site. Mg(2+) contacts are provided by Asp7, Glu67, and Asp140.

Belongs to the RuvC family. As to quaternary structure, homodimer which binds Holliday junction (HJ) DNA. The HJ becomes 2-fold symmetrical on binding to RuvC with unstacked arms; it has a different conformation from HJ DNA in complex with RuvA. In the full resolvosome a probable DNA-RuvA(4)-RuvB(12)-RuvC(2) complex forms which resolves the HJ. It depends on Mg(2+) as a cofactor.

It is found in the cytoplasm. It catalyses the reaction Endonucleolytic cleavage at a junction such as a reciprocal single-stranded crossover between two homologous DNA duplexes (Holliday junction).. Its function is as follows. The RuvA-RuvB-RuvC complex processes Holliday junction (HJ) DNA during genetic recombination and DNA repair. Endonuclease that resolves HJ intermediates. Cleaves cruciform DNA by making single-stranded nicks across the HJ at symmetrical positions within the homologous arms, yielding a 5'-phosphate and a 3'-hydroxyl group; requires a central core of homology in the junction. The consensus cleavage sequence is 5'-(A/T)TT(C/G)-3'. Cleavage occurs on the 3'-side of the TT dinucleotide at the point of strand exchange. HJ branch migration catalyzed by RuvA-RuvB allows RuvC to scan DNA until it finds its consensus sequence, where it cleaves and resolves the cruciform DNA. The polypeptide is Crossover junction endodeoxyribonuclease RuvC (Chloroflexus aurantiacus (strain ATCC 29364 / DSM 637 / Y-400-fl)).